Consider the following 273-residue polypeptide: Coiled-coil domain-containing protein 122 (273 aa).

A compositionally biased stretch (basic and acidic residues) spans 1–17 (MSDNKERKSQGFPKEDN). The disordered stretch occupies residues 1–39 (MSDNKERKSQGFPKEDNQDTSSLADAVEKVAKQQQSQAS). Coiled-coil stretches lie at residues 24-116 (ADAV…TAQE) and 179-269 (NRIT…RKCI).

This is Coiled-coil domain-containing protein 122 (CCDC122) from Homo sapiens (Human).